The following is a 197-amino-acid chain: A-kinase anchor protein 14 (197 aa).

Polar residues-rich tracts occupy residues 1–11 (MSETQNSTSQK) and 19–29 (AASQTMPNTQD). The segment at 1–29 (MSETQNSTSQKAMDEDNKAASQTMPNTQD) is disordered. The segment at 35 to 52 (ELTQVALALVEDVINYAV) is RII-binding.

Binds to type II regulatory subunits (RII). In terms of tissue distribution, present in cilia (at protein level). Expressed in tissues containing axoneme-based organelles (cilia and/or flagella): trachea and testis. Highly expressed in airway cilia.

The protein resides in the cytoplasm. Functionally, binds to type II regulatory subunits of protein kinase A and anchors/targets them. The polypeptide is A-kinase anchor protein 14 (AKAP14) (Homo sapiens (Human)).